Consider the following 660-residue polypeptide: MSLHISKLIEQYRSTKDNDLKYMLLRQNFKINDIEDELAPLVNELLLPVLVEEQDMEILNLVSFQVLPDLVLSMISDPAAAQLGWVISLICDPLLNQSMIHANRSFVLIETLRNVLQKIENSPHLDYHQPVNSSLEFISKFIVEMKRHMCDVDAAQLSHSLSESNMLIYIESLNLLLKFSFFSDAASPSVMVTLPFDILNDVFTIAQDYSATNTNESIDRITEKLLLTSTQLTHPVDLENLCPKMKYNTLAAVSRIWYKFGPIVDKLFTNRLLPVLFPPQMGEECNVEDVLEIVHNFHPYFSIRRLKDNRPLLSDSTISQLREGLFGMLSILNDSLTRTQNENDHGSDNLIDSDDGFGSDNDPEQQAYLDELVSEGYDENMYDGDTDDEDADDINVEKNDEATKDITETNKILLIFSELHYPQEERFSELLVELQTKIAINTSLIDKILSKETTELPTHNGEIADLNEILNEVKGNKPIRKNVIFCTLAHTLSLQSGSELSVLQLSIEVIDHLLVKNHSNNITRGEQFQLIKLILPHLKTNKSFIDTLKAGNFTQKIDEGVTLRTMILSLLLQLFPLDYSMLGEILPTIARYSVRDKDLGVRDLSFQLLDQILRTYYNYLIGIDWEWYKDDFYQVLQETCIKKDINTNLLLQFPPYLPHD.

A Glycyl lysine isopeptide (Lys-Gly) (interchain with G-Cter in NEDD8) cross-link involves residue lysine 16. The segment at 339 to 364 (TQNENDHGSDNLIDSDDGFGSDNDPE) is disordered. Positions 351–363 (IDSDDGFGSDNDP) are enriched in acidic residues.

In terms of assembly, interacts with unneddylated cullin CDC53. In terms of processing, neddylated at Lys-16.

Its function is as follows. Assembly factor of SCF (SKP1-CUL1-F-box protein) E3 ubiquitin ligase complexes that promotes the exchange of the substrate-recognition F-box subunit in SCF complexes, thereby playing a key role in the cellular repertoire of SCF complexes. Acts as a F-box protein exchange factor. Involved in the aging process. Longevity-assurance protein. The protein is Cullin-associated NEDD8-dissociated protein 1 homolog (LAG2) of Saccharomyces cerevisiae (strain ATCC 204508 / S288c) (Baker's yeast).